Reading from the N-terminus, the 573-residue chain is Poly(ribitol-phosphate) beta-N-acetylglucosaminyltransferase TarS (573 aa).

UDP-N-acetyl-alpha-D-glucosamine contacts are provided by residues P9, D41, N68, R76, 92-94 (DSD), R127, and E178. D94 provides a ligand contact to Mn(2+). The Proton acceptor role is filled by D179. UDP-N-acetyl-alpha-D-glucosamine is bound by residues R207 and 211–213 (HMS).

It belongs to the glycosyltransferase 2 family. In terms of assembly, homotrimer. Mn(2+) serves as cofactor.

The catalysed reaction is 4-O-[(D-ribitylphospho)(n)-di{(2R)-glycerylphospho}]-N-acetyl-beta-D-mannosaminyl-(1-&gt;4)-N-acetyl-alpha-D-glucosaminyl di-trans,octa-cis-undecaprenyl diphosphate + n UDP-N-acetyl-alpha-D-glucosamine = 4-O-([2-N-acetyl-beta-D-glucosaminyl-1-D-ribitylphospho](n)-di{[2R]-1-glycerylphospho})-N-acetyl-beta-D-mannosaminyl-(1-&gt;4)-N-acetyl-alpha-D-glucosaminyl di-trans,octa-cis-undecaprenyl diphosphate + n UDP + n H(+). The protein operates within cell wall biogenesis; poly(ribitol phosphate) teichoic acid biosynthesis. In terms of biological role, attaches beta-O-GlcNAc (beta-O-N-acetyl-D-glucosamine) residues to the C4 position of poly(RboP)-wall teichoic acids (WTAs). Mediates beta-lactam resistance in methicillin resistant Staphylococcus aureus (MRSA) strains. This chain is Poly(ribitol-phosphate) beta-N-acetylglucosaminyltransferase TarS, found in Staphylococcus aureus (strain Mu50 / ATCC 700699).